Reading from the N-terminus, the 396-residue chain is Probable sugar efflux transporter (396 aa).

A run of 12 helical transmembrane segments spans residues Val-15–Leu-35, Val-50–Leu-70, Leu-81–Phe-101, Val-103–Ala-123, Ala-136–Ile-156, Thr-169–Pro-189, Pro-209–Tyr-229, Phe-246–Gly-266, Ser-275–Ala-295, Leu-301–Val-321, Val-333–Gly-353, and Ala-364–Phe-384.

The protein belongs to the major facilitator superfamily. SotB (TC 2.A.1.2) family.

It localises to the cell inner membrane. In terms of biological role, involved in the efflux of sugars. The physiological role may be the reduction of the intracellular concentration of toxic sugars or sugar metabolites. The sequence is that of Probable sugar efflux transporter from Salmonella paratyphi C (strain RKS4594).